We begin with the raw amino-acid sequence, 254 residues long: Alcohol dehydrogenase (254 aa).

Phe-10 to Leu-33 is a binding site for NAD(+). Ser-138 lines the substrate pocket. Tyr-151 acts as the Proton acceptor in catalysis.

Belongs to the short-chain dehydrogenases/reductases (SDR) family. Homodimer.

The catalysed reaction is a primary alcohol + NAD(+) = an aldehyde + NADH + H(+). It catalyses the reaction a secondary alcohol + NAD(+) = a ketone + NADH + H(+). This chain is Alcohol dehydrogenase (Adh), found in Drosophila borealis (Fruit fly).